The following is a 735-amino-acid chain: MPLSRTLSVSSLPGLEDWEDEFDLENSVLFEVAWEVANKVGGIYTVLQTKAKVTGDEWGDNYFLVGPYTEQGVRTQVELLEPPTPALKRTLDSMNSKGCKVYFGRWLIEGGPLVVLLDVGASAWALERWKGELWDTCNIGVPWYDREANDAVLFGFLTTWFLGEFLAQNEEKPHVVAHFHEWLAGIGLCLCRARRLPVATIFTTHATLLGRYLCAGAVDFYNNLENFNVDKEAGERQIYHRYCMERAAAHCAHVFTTVSQITAIEAQHLLKRKPDIVTPNGLNVKKFSAMHEFQNLHAQSKARIQEFVRGHFYGHLDFNLDKTLYFFIAGRYEFSNKGADVFLEALARLNYLLRVNGSEQTVVAFFIMPARTNNFNVETLKGQAVRKQLWDTANTVKEKFGRKLYESLLVGSLPDMNKMLDKEDFTMMKRAIFATQRQSFPPVCTHNMLDDSSDPILTTIRRIGLFNSSADRVKVIFHPEFLSSTSPLLPVDYEEFVRGCHLGVFPSYYEPWGYTPAECTVMGIPSISTNLSGFGCFMEEHIADPSAYGIYILDRRFRSLDDSCSQLTSFLYSFCQQSRRQRIIQRNRTERLSDLLDWKYLGRYYMSARHMALAKAFPDHFTYEPHEADATQGYRYPRPASVPPSPSLSRHSSPHQSEDEEEPRDGLPEEDGERYDEDEEAAKDRRNIRAPEWPRRASCTSSSGGSKRSNSVDTSSLSTPSEPLSPASSLGEERN.

Ser8 is subject to Phosphoserine; by AMPK and PKA. Phosphoserine is present on Ser11. Lys39 lines the UDP pocket. The UDP-alpha-D-glucose site is built by His205 and Arg211. Positions 291, 292, 294, 297, and 301 each coordinate alpha-D-glucose 6-phosphate. Arg331 provides a ligand contact to UDP. Arg331 is a binding site for UDP-alpha-D-glucose. Ser412 is subject to Phosphoserine. An alpha-D-glucose 6-phosphate-binding site is contributed by His501. UDP-alpha-D-glucose-binding residues include Glu510, Trp512, and Gly513. Thr515 provides a ligand contact to UDP. The alpha-D-glucose 6-phosphate site is built by Arg582 and Arg586. The interval 629–735 (DATQGYRYPR…PASSLGEERN (107 aa)) is disordered. Residue Ser641 is modified to Phosphoserine; by DYRK2, GSK3-alpha, GSK3-beta and PASK. Phosphoserine; by GSK3-alpha and GSK3-beta is present on residues Ser645 and Ser649. At Ser652 the chain carries Phosphoserine. Phosphoserine; by GSK3-alpha and GSK3-beta is present on Ser653. Ser657 carries the phosphoserine; by CK2 modification. Over residues 658 to 681 (EDEEEPRDGLPEEDGERYDEDEEA) the composition is skewed to acidic residues. Positions 682-695 (AKDRRNIRAPEWPR) are enriched in basic and acidic residues. Ser698 carries the phosphoserine modification. The span at 698 to 735 (SCTSSSGGSKRSNSVDTSSLSTPSEPLSPASSLGEERN) shows a compositional bias: low complexity. Residue Thr700 is modified to Phosphothreonine. Phosphoserine is present on residues Ser709 and Ser711. Thr719 carries the phosphothreonine modification. Residues Ser725 and Ser729 each carry the phosphoserine modification.

It belongs to the glycosyltransferase 3 family. In terms of assembly, part of the GYS1-GYG1 complex, a heterooctamer composed of a tetramer of GYS1 and 2 dimers of GYG1, where each GYS1 protomer binds to one GYG1 subunit (via GYG1 C-terminus); the GYS1 tetramer may dissociate from GYG1 dimers to continue glycogen polymerization on its own. Post-translationally, phosphorylation at Ser-8 is required for modification of Ser-11 by casein kinase I. In terms of processing, phosphorylated at Ser-641 by PASK, leading to inactivation; phosphorylation by PASK is inhibited by glycogen. Dephosphorylation at Ser-641 and Ser-645 by PP1 activates the enzyme. Phosphorylation at Ser-8 by AMPK inactivates the enzyme activity. Phosphorylated at Ser-641 by DYRK2, leading to inactivation. Primed phosphorylation at Ser-657 (site 5) by CSNK2A1 and CSNK2A2 is required for inhibitory phosphorylation at Ser-641 (site 3a), Ser-645 (site 3b), Ser-649 (site 3c) and Ser-653 (site 4) by GSK3A and GSK3B.

The catalysed reaction is [(1-&gt;4)-alpha-D-glucosyl](n) + UDP-alpha-D-glucose = [(1-&gt;4)-alpha-D-glucosyl](n+1) + UDP + H(+). It functions in the pathway glycan biosynthesis; glycogen biosynthesis. Allosteric activation by glucose-6-phosphate. Phosphorylation reduces the activity towards UDP-glucose. When in the non-phosphorylated state, glycogen synthase does not require glucose-6-phosphate as an allosteric activator; when phosphorylated it does. In terms of biological role, glycogen synthase participates in the glycogen biosynthetic process along with glycogenin and glycogen branching enzyme. Extends the primer composed of a few glucose units formed by glycogenin by adding new glucose units to it. In this context, glycogen synthase transfers the glycosyl residue from UDP-Glc to the non-reducing end of alpha-1,4-glucan. This Oryctolagus cuniculus (Rabbit) protein is Glycogen [starch] synthase, muscle.